A 361-amino-acid polypeptide reads, in one-letter code: Phosphate acyltransferase (361 aa).

It belongs to the PlsX family. Homodimer. Probably interacts with PlsY.

The protein localises to the cytoplasm. It catalyses the reaction a fatty acyl-[ACP] + phosphate = an acyl phosphate + holo-[ACP]. It participates in lipid metabolism; phospholipid metabolism. Functionally, catalyzes the reversible formation of acyl-phosphate (acyl-PO(4)) from acyl-[acyl-carrier-protein] (acyl-ACP). This enzyme utilizes acyl-ACP as fatty acyl donor, but not acyl-CoA. This chain is Phosphate acyltransferase, found in Anaeromyxobacter dehalogenans (strain 2CP-C).